The following is a 583-amino-acid chain: Bifunctional lycopene cyclase/phytoene synthase (583 aa).

The segment at 1–243 (MGFDYALVHL…IVFGQLAFDN (243 aa)) is lycopene beta-cyclase. 7 helical membrane-spanning segments follow: residues 3 to 23 (FDYALVHLKYTIPPAVLLTWL), 35 to 55 (KVGYLVSIAVASTIPWDSYLI), 75 to 97 (IPLEEVFFFIIQTYNTSLLYLLL), 120 to 140 (YMRLAGQVFFLALIAWGWRCI), 151 to 171 (LILVWAGPFLLMLWSLAYQFI), 173 to 193 (ALPVTNTALPIFLPTLYLWVV), and 221 to 241 (IEEALFFLATNALIVFGQLAF). Residues 250–583 (TFPHLFTGPS…MVAWRTLNSK (334 aa)) are phytoene synthase.

This sequence in the N-terminal section; belongs to the lycopene beta-cyclase family. In the C-terminal section; belongs to the phytoene/squalene synthase family.

The protein resides in the membrane. The catalysed reaction is all-trans-lycopene = gamma-carotene. It catalyses the reaction gamma-carotene = all-trans-beta-carotene. The enzyme catalyses 2 (2E,6E,10E)-geranylgeranyl diphosphate = 15-cis-phytoene + 2 diphosphate. The protein operates within carotenoid biosynthesis; beta-carotene biosynthesis. Its pathway is carotenoid biosynthesis; phytoene biosynthesis; all-trans-phytoene from geranylgeranyl diphosphate: step 1/1. Functionally, bifunctional enzyme that catalyzes the reactions from geranylgeranyl diphosphate to phytoene (phytoene synthase) and lycopene to beta-carotene via the intermediate gamma-carotene (lycopene cyclase). In Pyrenophora tritici-repentis (strain Pt-1C-BFP) (Wheat tan spot fungus), this protein is Bifunctional lycopene cyclase/phytoene synthase.